A 119-amino-acid polypeptide reads, in one-letter code: Large ribosomal subunit protein bL20 (119 aa).

The protein belongs to the bacterial ribosomal protein bL20 family.

Functionally, binds directly to 23S ribosomal RNA and is necessary for the in vitro assembly process of the 50S ribosomal subunit. It is not involved in the protein synthesizing functions of that subunit. The sequence is that of Large ribosomal subunit protein bL20 from Shouchella clausii (strain KSM-K16) (Alkalihalobacillus clausii).